The chain runs to 284 residues: Trimeric intracellular cation channel type B-B (284 aa).

Residues 1 to 15 are Lumenal-facing; that stretch reads MESLSEVSVQFSQLS. A helical membrane pass occupies residues 16–32; that stretch reads MFPFFDMAHYLASVMSA. Over 33 to 44 the chain is Cytoplasmic; the sequence is REQAGALDIASH. A helical membrane pass occupies residues 45–68; it reads SPMASWFSAMLHCFGGGILSSILL. The Lumenal portion of the chain corresponds to 69 to 79; the sequence is AEPPVGILANT. The chain crosses the membrane as a helical span at residues 80–99; the sequence is TNIMLASAIWYMVYYFPYDL. The Cytoplasmic segment spans residues 100–102; that stretch reads FYN. A helical transmembrane segment spans residues 103-121; sequence CFFFLPIRLIAAGMKEVTR. A 1,2-diacyl-sn-glycero-3-phospho-(1D-myo-inositol-4,5-bisphosphate) is bound by residues K117 and R121. The Lumenal portion of the chain corresponds to 122–139; that stretch reads TWKILSGITHAHSHYKDA. Residues 140–157 traverse the membrane as a helical segment; sequence WLVMITIGWARGAGGGLI. At 158-178 the chain is on the cytoplasmic side; that stretch reads SNFEQLVRGVWKPESNEFLKM. Residues 179–196 form a helical membrane-spanning segment; that stretch reads SYPVKVTLIGAVLFTLQH. At 197–204 the chain is on the lumenal side; it reads GHYLPISR. Residues 205–225 form a helical membrane-spanning segment; it reads HNLMFIYTMFLVSIKVTMMLT. Residues 226–284 are Cytoplasmic-facing; it reads HSAGSPFLPLETPLHRILFGLRQNQAEVRESPSSSGAKGKPSKKTLDKDSGEQSNKKDK. Positions 250–284 are disordered; the sequence is QAEVRESPSSSGAKGKPSKKTLDKDSGEQSNKKDK. A compositionally biased stretch (basic and acidic residues) spans 269 to 284; it reads KTLDKDSGEQSNKKDK.

The protein belongs to the TMEM38 family. In terms of assembly, homotrimer; conformation seems to be controled by binding to diacylglycerol (DAG).

The protein resides in the endoplasmic reticulum membrane. The enzyme catalyses K(+)(in) = K(+)(out). Its activity is regulated as follows. Channel activity is activated by increased cytosolic Ca(2+) levels and blocked by luminal high Ca(2+) levels. Functionally, intracellular monovalent cation channel required for maintenance of rapid intracellular calcium release. Acts as a potassium counter-ion channel that functions in synchronization with calcium release from intracellular stores. Activated by increased cytosolic Ca(2+) levels. The protein is Trimeric intracellular cation channel type B-B (tmem38b-b) of Xenopus laevis (African clawed frog).